We begin with the raw amino-acid sequence, 94 residues long: Alpha-galactosyl-binding lectin (94 aa).

As to quaternary structure, homodimer. In terms of processing, contains three disulfide bonds.

Its function is as follows. Alpha-galactosyl-binding lectin with preference for galactose-alpha-1,4-galactose. This chain is Alpha-galactosyl-binding lectin, found in Lyophyllum decastes (Fried chicken mushroom).